Reading from the N-terminus, the 962-residue chain is Glycine dehydrogenase (decarboxylating) (962 aa).

The residue at position 710 (K710) is an N6-(pyridoxal phosphate)lysine.

The protein belongs to the GcvP family. The glycine cleavage system is composed of four proteins: P, T, L and H. The cofactor is pyridoxal 5'-phosphate.

It carries out the reaction N(6)-[(R)-lipoyl]-L-lysyl-[glycine-cleavage complex H protein] + glycine + H(+) = N(6)-[(R)-S(8)-aminomethyldihydrolipoyl]-L-lysyl-[glycine-cleavage complex H protein] + CO2. In terms of biological role, the glycine cleavage system catalyzes the degradation of glycine. The P protein binds the alpha-amino group of glycine through its pyridoxal phosphate cofactor; CO(2) is released and the remaining methylamine moiety is then transferred to the lipoamide cofactor of the H protein. The polypeptide is Glycine dehydrogenase (decarboxylating) (Idiomarina loihiensis (strain ATCC BAA-735 / DSM 15497 / L2-TR)).